We begin with the raw amino-acid sequence, 311 residues long: tRNA-cytidine(32) 2-sulfurtransferase (311 aa).

A PP-loop motif motif is present at residues 47–52 (SGGKDS). Residues Cys122, Cys125, and Cys213 each coordinate [4Fe-4S] cluster.

The protein belongs to the TtcA family. As to quaternary structure, homodimer. Mg(2+) is required as a cofactor. Requires [4Fe-4S] cluster as cofactor.

Its subcellular location is the cytoplasm. It catalyses the reaction cytidine(32) in tRNA + S-sulfanyl-L-cysteinyl-[cysteine desulfurase] + AH2 + ATP = 2-thiocytidine(32) in tRNA + L-cysteinyl-[cysteine desulfurase] + A + AMP + diphosphate + H(+). It functions in the pathway tRNA modification. Catalyzes the ATP-dependent 2-thiolation of cytidine in position 32 of tRNA, to form 2-thiocytidine (s(2)C32). The sulfur atoms are provided by the cysteine/cysteine desulfurase (IscS) system. This is tRNA-cytidine(32) 2-sulfurtransferase from Salmonella dublin (strain CT_02021853).